The chain runs to 663 residues: UvrABC system protein B (663 aa).

Residues Met1–Phe10 are compositionally biased toward basic and acidic residues. The disordered stretch occupies residues Met1–Pro23. Residues Asp31–Arg418 enclose the Helicase ATP-binding domain. ATP is bound at residue Gly44–Thr51. Residues Tyr97 to Val120 carry the Beta-hairpin motif. The Helicase C-terminal domain maps to Gln435–Ile597. Residues Lys627–Met662 enclose the UVR domain.

Belongs to the UvrB family. Forms a heterotetramer with UvrA during the search for lesions. Interacts with UvrC in an incision complex.

Its subcellular location is the cytoplasm. Functionally, the UvrABC repair system catalyzes the recognition and processing of DNA lesions. A damage recognition complex composed of 2 UvrA and 2 UvrB subunits scans DNA for abnormalities. Upon binding of the UvrA(2)B(2) complex to a putative damaged site, the DNA wraps around one UvrB monomer. DNA wrap is dependent on ATP binding by UvrB and probably causes local melting of the DNA helix, facilitating insertion of UvrB beta-hairpin between the DNA strands. Then UvrB probes one DNA strand for the presence of a lesion. If a lesion is found the UvrA subunits dissociate and the UvrB-DNA preincision complex is formed. This complex is subsequently bound by UvrC and the second UvrB is released. If no lesion is found, the DNA wraps around the other UvrB subunit that will check the other stand for damage. This Streptococcus pyogenes serotype M18 (strain MGAS8232) protein is UvrABC system protein B.